The sequence spans 291 residues: Phosphate import ATP-binding protein PstB (291 aa).

Positions Met-1–Asp-21 are disordered. An ABC transporter domain is found at Tyr-45–Ile-286. Gly-77 to Ser-84 lines the ATP pocket.

This sequence belongs to the ABC transporter superfamily. Phosphate importer (TC 3.A.1.7) family. As to quaternary structure, the complex is composed of two ATP-binding proteins (PstB), two transmembrane proteins (PstC and PstA) and a solute-binding protein (PstS).

It localises to the cell membrane. It carries out the reaction phosphate(out) + ATP + H2O = ADP + 2 phosphate(in) + H(+). Functionally, part of the ABC transporter complex PstSACB involved in phosphate import. Responsible for energy coupling to the transport system. The sequence is that of Phosphate import ATP-binding protein PstB from Staphylococcus saprophyticus subsp. saprophyticus (strain ATCC 15305 / DSM 20229 / NCIMB 8711 / NCTC 7292 / S-41).